The chain runs to 121 residues: Large ribosomal subunit protein bL12 (121 aa).

This sequence belongs to the bacterial ribosomal protein bL12 family. As to quaternary structure, homodimer. Part of the ribosomal stalk of the 50S ribosomal subunit. Forms a multimeric L10(L12)X complex, where L10 forms an elongated spine to which 2 to 4 L12 dimers bind in a sequential fashion. Binds GTP-bound translation factors.

Its function is as follows. Forms part of the ribosomal stalk which helps the ribosome interact with GTP-bound translation factors. Is thus essential for accurate translation. In Erwinia tasmaniensis (strain DSM 17950 / CFBP 7177 / CIP 109463 / NCPPB 4357 / Et1/99), this protein is Large ribosomal subunit protein bL12.